Here is a 248-residue protein sequence, read N- to C-terminus: Fasciclin-like arabinogalactan protein 19 (248 aa).

The first 29 residues, 1-29, serve as a signal peptide directing secretion; the sequence is MAKISSASCFRAIFLGALIILCLPHPSTG. One can recognise an FAS1 domain in the interval 35 to 166; it reads LERAIAILRV…IAVHGLADLL (132 aa). Residues Asn-114 and Asn-136 are each glycosylated (N-linked (GlcNAc...) asparagine). Residues 213 to 226 show a composition bias toward low complexity; it reads SPSVEEVSPSPSWG. The interval 213–248 is disordered; it reads SPSVEEVSPSPSWGEGEEDFIVGDEGGPLDGRNNGF.

Belongs to the fasciclin-like AGP family.

The protein localises to the secreted. In terms of biological role, may be a cell surface adhesion protein. The sequence is that of Fasciclin-like arabinogalactan protein 19 (FLA19) from Arabidopsis thaliana (Mouse-ear cress).